A 410-amino-acid polypeptide reads, in one-letter code: Retrovirus-related Pol polyprotein from type-1 retrotransposable element R1 2 (410 aa).

The Reverse transcriptase domain occupies 1–118 (GCPQGSIGGP…SCFRYLGVNV (118 aa)). Positions 254 to 410 (SSVIKLERLV…RLNLELDVNG (157 aa)) are nucleic acid-binding endonuclease.

It catalyses the reaction DNA(n) + a 2'-deoxyribonucleoside 5'-triphosphate = DNA(n+1) + diphosphate. The sequence is that of Retrovirus-related Pol polyprotein from type-1 retrotransposable element R1 2 from Nasonia vitripennis (Parasitic wasp).